The sequence spans 312 residues: ADIPOR-like receptor IZH4 (312 aa).

A disordered region spans residues 1–38 (MVSLTTIEQSPVKCETTTEKESNDTRGTDSNENAETKE). Residues 1–64 (MVSLTTIEQS…YKNKSSRNES (64 aa)) lie on the Cytoplasmic side of the membrane. Residues 16–38 (TTTEKESNDTRGTDSNENAETKE) show a composition bias toward basic and acidic residues. Residues 65–85 (LVALIYLLGSMLSFCLLIFFT) form a helical membrane-spanning segment. Over 86 to 101 (DFYLIPLFPTTTTMTD) the chain is Lumenal. A helical transmembrane segment spans residues 102–122 (YIVFNFYLLNVFVFCMVHFIY). The Cytoplasmic segment spans residues 123–141 (HFVKNISLQQHLEHWQKFS). A helical membrane pass occupies residues 142–162 (YLSNINLLISSQITILYYLFY). Topologically, residues 163–165 (DYV) are lumenal. Residues 166–186 (FFFKIFTLLMNFIGLVAYFFI) form a helical membrane-spanning segment. Residues 187 to 201 (LTDKLISSKRFNKTV) lie on the Cytoplasmic side of the membrane. Residues 202–222 (FFISVSVVCCSLPLLTAIITF) form a helical membrane-spanning segment. Residues 223 to 231 (DGLENLKER) are Lumenal-facing. The helical transmembrane segment at 232–252 (IKVNAITWELVALVAASIIYV) threads the bilayer. Residues 253-277 (TRFPESLFRRNKKEEGWNHSEYLFH) are Cytoplasmic-facing. The chain crosses the membrane as a helical span at residues 278 to 298 (LLISGTAFYHFFILIQSYILM). Topologically, residues 299–312 (HSSLNQPELINFKS) are lumenal.

This sequence belongs to the ADIPOR family.

The protein resides in the endoplasmic reticulum membrane. In terms of biological role, ADIPOR-like receptor involved in zinc metabolism either by altering membrane sterol content or by directly altering cellular zinc levels. The protein is ADIPOR-like receptor IZH4 (IZH4) of Saccharomyces cerevisiae (strain ATCC 204508 / S288c) (Baker's yeast).